The primary structure comprises 729 residues: DNA topoisomerase 3 (729 aa).

The Toprim domain occupies 3–136 (KSVVIAEKPS…IKRLWISSVT (134 aa)). Mg(2+) contacts are provided by Glu9 and Asp105. One can recognise a Topo IA-type catalytic domain in the interval 153–594 (YDNLYASAVA…EMKNYTKEIV (442 aa)). An interaction with DNA region spans residues 187-192 (NCGRVQ). Tyr310 acts as the O-(5'-phospho-DNA)-tyrosine intermediate in catalysis. Positions 686 to 713 (ERRKKESGNKADKRDVQKYMKQQKKEEE) are enriched in basic and acidic residues. The disordered stretch occupies residues 686–718 (ERRKKESGNKADKRDVQKYMKQQKKEEEPLNNP).

This sequence belongs to the type IA topoisomerase family. It depends on Mg(2+) as a cofactor.

The enzyme catalyses ATP-independent breakage of single-stranded DNA, followed by passage and rejoining.. In terms of biological role, releases the supercoiling and torsional tension of DNA, which is introduced during the DNA replication and transcription, by transiently cleaving and rejoining one strand of the DNA duplex. Introduces a single-strand break via transesterification at a target site in duplex DNA. The scissile phosphodiester is attacked by the catalytic tyrosine of the enzyme, resulting in the formation of a DNA-(5'-phosphotyrosyl)-enzyme intermediate and the expulsion of a 3'-OH DNA strand. The free DNA strand then undergoes passage around the unbroken strand, thus removing DNA supercoils. Finally, in the religation step, the DNA 3'-OH attacks the covalent intermediate to expel the active-site tyrosine and restore the DNA phosphodiester backbone. This Bacillus thuringiensis subsp. konkukian (strain 97-27) protein is DNA topoisomerase 3.